Here is a 220-residue protein sequence, read N- to C-terminus: MTILTIEALRTEAAIFSAAESIHPEPLLYGVTDGKAVGTYIEQKFRLYLKEHYEFVQGNSASGIDFPGLLVDVKVTSIRQPQSSCPFKSARQKIFGLGYSLLIFVYDKIDNSTNRTATLNILHTIYVSAERTADFQMTRGIRNILANEGNKDDLIAFMSDRNLPVDEIEAGNVADEILRNPPMQGFLTISNALQWRLQYGRVIERAGQEDGILTVYRNNP.

The enzyme catalyses Endonucleolytic cleavage of DNA to give specific double-stranded fragments with terminal 5'-phosphates.. A P subtype restriction enzyme that recognizes the double-stranded sequence 5'-TTCGAA-3' and cleaves after T-2. This chain is Type II restriction enzyme NspV, found in Nostoc sp. (strain ATCC 29411 / PCC 7524).